We begin with the raw amino-acid sequence, 71 residues long: Small ribosomal subunit protein bS21 (71 aa).

This sequence belongs to the bacterial ribosomal protein bS21 family.

The chain is Small ribosomal subunit protein bS21 from Baumannia cicadellinicola subsp. Homalodisca coagulata.